We begin with the raw amino-acid sequence, 254 residues long: MTKESSVKIGLIGAAGRMGKAIQEAASQQDIQLSGGIGRKGAEFGSYNDSESLAKASDVLIDFSTAAALKDNIEAALHHKKPIIIGTTGLTEADHQLIEQAASKIPVILAANTSLGVNMLAALVKQAAAKLGSDWDIEIVEMHHRHKKDAPSGTALLLGRAAAEGRGEKLEDIADLQRCPATEPRETGRIGFASLRGGSVAGDHMVVFASEGERIELGHRAESRIIFARGALKAALWLADQSAGFYQMKDVLGL.

13–18 (GAAGRM) contributes to the NAD(+) binding site. NADP(+) is bound at residue R39. NAD(+) contacts are provided by residues 86–88 (GTT) and 110–113 (AANT). H143 acts as the Proton donor/acceptor in catalysis. H144 provides a ligand contact to (S)-2,3,4,5-tetrahydrodipicolinate. The active-site Proton donor is the K147. 153–154 (GT) serves as a coordination point for (S)-2,3,4,5-tetrahydrodipicolinate.

This sequence belongs to the DapB family.

The protein resides in the cytoplasm. The enzyme catalyses (S)-2,3,4,5-tetrahydrodipicolinate + NAD(+) + H2O = (2S,4S)-4-hydroxy-2,3,4,5-tetrahydrodipicolinate + NADH + H(+). It carries out the reaction (S)-2,3,4,5-tetrahydrodipicolinate + NADP(+) + H2O = (2S,4S)-4-hydroxy-2,3,4,5-tetrahydrodipicolinate + NADPH + H(+). Its pathway is amino-acid biosynthesis; L-lysine biosynthesis via DAP pathway; (S)-tetrahydrodipicolinate from L-aspartate: step 4/4. Its function is as follows. Catalyzes the conversion of 4-hydroxy-tetrahydrodipicolinate (HTPA) to tetrahydrodipicolinate. This chain is 4-hydroxy-tetrahydrodipicolinate reductase, found in Zymomonas mobilis subsp. mobilis (strain ATCC 31821 / ZM4 / CP4).